We begin with the raw amino-acid sequence, 186 residues long: Inner membrane-spanning protein YciB (186 aa).

5 helical membrane passes run 10–30, 47–67, 76–96, 121–141, and 149–169; these read IILFFAAFKVWGIYVATAVAI, VEPLQWLSLGVIVLFGGATLL, WKPTVLYWLMGGTLLVGQLMF, WGWTGFFATMGVLNLWVAYHF, and FKLFGGIGLMFAFVIAQALYL.

The protein belongs to the YciB family.

It is found in the cell inner membrane. Functionally, plays a role in cell envelope biogenesis, maintenance of cell envelope integrity and membrane homeostasis. This is Inner membrane-spanning protein YciB from Acidovorax ebreus (strain TPSY) (Diaphorobacter sp. (strain TPSY)).